A 333-amino-acid chain; its full sequence is Ribosomal RNA large subunit methyltransferase F (333 aa).

Over residues 1–10 (MPQPPKRPRK) the composition is skewed to basic residues. Residues 1 to 31 (MPQPPKRPRKPAPAAVKTAPAKGELHPRNRH) are disordered. The segment covering 12 to 22 (APAAVKTAPAK) has biased composition (low complexity).

It belongs to the methyltransferase superfamily. METTL16/RlmF family.

The protein resides in the cytoplasm. It carries out the reaction adenosine(1618) in 23S rRNA + S-adenosyl-L-methionine = N(6)-methyladenosine(1618) in 23S rRNA + S-adenosyl-L-homocysteine + H(+). Functionally, specifically methylates the adenine in position 1618 of 23S rRNA. This Ectopseudomonas mendocina (strain ymp) (Pseudomonas mendocina) protein is Ribosomal RNA large subunit methyltransferase F.